The sequence spans 1769 residues: Gamma-tubulin complex component 6 (1769 aa).

Disordered regions lie at residues 809-842, 859-881, and 1284-1360; these read EAQQ…HSCD, STPS…PFST, and TVCS…AEAR. Residues 820-831 are compositionally biased toward polar residues; that stretch reads FPSTGSQVTSTG. The span at 1314-1326 shows a compositional bias: basic and acidic residues; that stretch reads PEEKGPGKSRDAE. Positions 1332-1343 are enriched in polar residues; sequence LPSSSQEDTAVP.

Belongs to the TUBGCP family. As to quaternary structure, component of the gamma-tubulin ring complex (gTuRC) consisting of TUBGCP2, TUBGCP3, TUBGCP4, TUBGCP5 and TUBGCP6 and gamma-tubulin TUBG1 or TUBG2. TUBGCP2, TUBGCP3, TUBGCP4, TUBGCP5 and TUBGCP6 assemble in a 5:5:2:1:1 stoichiometry; each is associated with a gamma-tubulin, thereby arranging 14 gamma-tubulins in a helical manner. Gamma-tubulin at the first position is blocked by TUBGCP3 at the last position, allowing 13 protafilaments to grow into a microtubule. The gTuRC (via TUBGCP3 and TUBGCP6) interacts with ACTB and MZT1; the interactions form a luminal bridge that stabilizes the initial structure during complex assembly. The gTuRC (via TUBGCP2) interacts with MZT2A/MZT2B and CDK5RAP2 (via CM1 motif); the interactions play a role in gTuRC activation.

It localises to the cytoplasm. The protein localises to the cytoskeleton. It is found in the microtubule organizing center. The protein resides in the centrosome. Its function is as follows. Component of the gamma-tubulin ring complex (gTuRC) which mediates microtubule nucleation. The gTuRC regulates the minus-end nucleation of alpha-beta tubulin heterodimers that grow into microtubule protafilaments, a critical step in centrosome duplication and spindle formation. The sequence is that of Gamma-tubulin complex component 6 (Tubgcp6) from Mus musculus (Mouse).